The chain runs to 187 residues: Elongation factor P (187 aa).

The protein belongs to the elongation factor P family.

The protein localises to the cytoplasm. Its pathway is protein biosynthesis; polypeptide chain elongation. Its function is as follows. Involved in peptide bond synthesis. Stimulates efficient translation and peptide-bond synthesis on native or reconstituted 70S ribosomes in vitro. Probably functions indirectly by altering the affinity of the ribosome for aminoacyl-tRNA, thus increasing their reactivity as acceptors for peptidyl transferase. The protein is Elongation factor P of Helicobacter acinonychis (strain Sheeba).